A 1476-amino-acid polypeptide reads, in one-letter code: Cystic fibrosis transmembrane conductance regulator (1476 aa).

Residues 1–77 are Cytoplasmic-facing; that stretch reads MQKSPLEKAS…QLIHALRRCF (77 aa). Residues 78–98 form a helical membrane-spanning segment; the sequence is VWRFVFYGVLLYLGEVTKAVQ. Residues 81–365 enclose the ABC transmembrane type-1 1 domain; it reads FVFYGVLLYL…TAVQIWYDSL (285 aa). Residues 99–122 lie on the Extracellular side of the membrane; sequence PVLLGRIIASYDPDNTEERSIAIY. A helical transmembrane segment spans residues 123–146; it reads LGIGLCLLFIVRTLLLHPAIFGLH. Residues 147–195 lie on the Cytoplasmic side of the membrane; the sequence is HIGMQMRIAMFSLIYKKTLKLSSRVLDKISIGQLISLLSNNLNKFDEGL. Residues 196–216 traverse the membrane as a helical segment; sequence ALAHFIWIAPLQVVLLMGLLW. At 217-222 the chain is on the extracellular side; sequence DLLQFS. The chain crosses the membrane as a helical span at residues 223-243; that stretch reads AFCGLGLLIVLVIFQAILGKM. At 244–298 the chain is on the cytoplasmic side; that stretch reads MVKYRDKRAAKINERLVITSEVIDNIYSVKAYCWESAMEKIIESLREEELKMTRR. The chain crosses the membrane as a helical span at residues 299-319; the sequence is SAYMRFFTSSAFFFSGFFVVF. The Extracellular segment spans residues 320-339; the sequence is LSVLPYTVINGIVLRKIFTT. Residues 340–358 form a helical membrane-spanning segment; sequence ISFCIVLRMSVTRQFPTAV. Over 359-853 the chain is Cytoplasmic; sequence QIWYDSLGMI…YLRYFTLHRG (495 aa). ATP is bound by residues Trp-401, 458–465, and Gln-493; that span reads GSTGAGKT. The ABC transporter 1 domain maps to 412-646; the sequence is VQLNNDDRKT…RPDFSSKLMG (235 aa). Residue Cys-524 is the site of S-palmitoyl cysteine attachment. Phosphoserine occurs at positions 549 and 660. Residues 654–826 are disordered R region; it reads TEERRSSILT…EEINEEDLKE (173 aa). Phosphoserine; by PKA is present on Ser-670. 3 positions are modified to phosphoserine: Ser-684, Ser-698, and Ser-710. At Thr-715 the chain carries Phosphothreonine. A phosphoserine mark is found at Ser-732, Ser-763, Ser-785, Ser-790, and Ser-808. The chain crosses the membrane as a helical span at residues 854-874; the sequence is LFAVLIWCVLVFLVEVAASLF. The ABC transmembrane type-1 2 domain occupies 854–1153; that stretch reads LFAVLIWCVL…SSIDTDSLMR (300 aa). Residues 875-913 lie on the Extracellular side of the membrane; that stretch reads VLWLLKNNPVNGGNNGTKIANTSYVVVITSSSFYYIFYI. N-linked (GlcNAc...) asparagine glycosylation is found at Asn-889 and Asn-895. A discontinuously helical transmembrane segment spans residues 914–934; it reads YVGVADTLLALSLFRGLPLVH. The Cytoplasmic portion of the chain corresponds to 935-985; the sequence is TLITASKILHRKMLHSILHAPMSTFNKLKAGGILNRFSKDIAILDDFLPLT. Residues 986–1006 form a helical membrane-spanning segment; the sequence is IFDFIQLLFIVVGAIIVVSAL. The Extracellular segment spans residues 1007 to 1008; sequence QP. A helical membrane pass occupies residues 1009–1029; that stretch reads YIFLATVPGLAVFILLRAYFL. The Cytoplasmic segment spans residues 1030–1090; that stretch reads HTSQQLKQLE…TANWFMYLAT (61 aa). A helical membrane pass occupies residues 1091-1111; sequence LRWFQMRIDMIFVLFFIVVTF. The Extracellular segment spans residues 1112-1125; that stretch reads ISILTTGEGEGTTG. The chain crosses the membrane as a helical span at residues 1126–1146; it reads IILTLAMNIMSTLQWAVNSSI. The Cytoplasmic portion of the chain corresponds to 1147–1476; sequence DTDSLMRSVS…TEEEVQETRL (330 aa). In terms of domain architecture, ABC transporter 2 spans 1208–1439; sequence VKDLTVKYVD…KSVFQRALSS (232 aa). ATP contacts are provided by residues Tyr-1215 and 1240-1247; that span reads GRTGSGKS. The tract at residues 1382 to 1476 is interaction with GORASP2; the sequence is RVLRQAFAGC…TEEEVQETRL (95 aa). Cys-1391 is lipidated: S-palmitoyl cysteine. Residues Ser-1440 and Ser-1452 each carry the phosphoserine modification. The span at 1445-1456 shows a compositional bias: basic residues; it reads LFHGRHSSKQKP. The tract at residues 1445 to 1476 is disordered; it reads LFHGRHSSKQKPRTQITAVKEETEEEVQETRL. Residues 1466 to 1476 are compositionally biased toward acidic residues; sequence ETEEEVQETRL. The PDZ-binding motif lies at 1474–1476; it reads TRL.

The protein belongs to the ABC transporter superfamily. ABCC family. CFTR transporter (TC 3.A.1.202) subfamily. As to quaternary structure, monomer; does not require oligomerization for channel activity. May form oligomers in the membrane. Interacts with SLC4A7 through NHERF1. Interacts with SHANK2. Interacts with NHERF1 and MYO6. Interacts (via C-terminus) with GOPC (via PDZ domain); this promotes CFTR internalization and thereby decreases channel activity. Interacts with SLC4A7 through NHERF1. Found in a complex with MYO5B and RAB11A. Interacts with ANO1. Interacts with SLC26A8. Interacts with AHCYL1; the interaction increases CFTR activity. Interacts with CSE1L. The core-glycosylated form interacts with GORASP2 (via PDZ GRASP-type 1 domain) in respone to ER stress. Interacts with MARCHF2; the interaction leads to CFTR ubiqtuitination and degradation. Interacts with ADGRG2. Post-translationally, N-glycosylated. Phosphorylated; cAMP treatment promotes phosphorylation and activates the channel. Dephosphorylation decreases the ATPase activity (in vitro). Phosphorylation at PKA sites activates the channel. Phosphorylation at PKC sites enhances the response to phosphorylation by PKA. Phosphorylated by AMPK; this inhibits channel activity. In terms of processing, ubiquitinated, leading to its degradation in the lysosome. Deubiquitination by USP10 in early endosomes enhances its endocytic recycling to the cell membrane. Ubiquitinated by RNF185 during ER stress. Ubiquitinated by MARCHF2. As to expression, detected in epithelial cells in nasopharynx, submandibular gland, pancreas and ileum (at protein level). Expressed in the epididymis. In the caput section of the epididymis, expressed uniformly on both the luminal and basolateral sides of the ducts and on sperm in the caput lumen (at protein level). In the cauda, detected along the luminal border but not continuously and is also expressed on the basolateral surface. Within the caudal lumen, detected on sperm.

Its subcellular location is the apical cell membrane. The protein localises to the early endosome membrane. The protein resides in the cell membrane. It localises to the recycling endosome membrane. It is found in the endoplasmic reticulum membrane. Its subcellular location is the nucleus. It carries out the reaction ATP + H2O + closed Cl(-) channel = ADP + phosphate + open Cl(-) channel.. The enzyme catalyses chloride(in) = chloride(out). The catalysed reaction is hydrogencarbonate(in) = hydrogencarbonate(out). It catalyses the reaction ATP + H2O = ADP + phosphate + H(+). Its function is as follows. Epithelial ion channel that plays an important role in the regulation of epithelial ion and water transport and fluid homeostasis. Mediates the transport of chloride ions across the cell membrane. Possesses an intrinsic ATPase activity and utilizes ATP to gate its channel; the passive flow of anions through the channel is gated by cycles of ATP binding and hydrolysis by the ATP-binding domains. The ion channel is also permeable to HCO(3)(-); selectivity depends on the extracellular chloride concentration. Exerts its function also by modulating the activity of other ion channels and transporters. Contributes to the regulation of the pH and the ion content of the epithelial fluid layer. Modulates the activity of the epithelial sodium channel (ENaC) complex, in part by regulating the cell surface expression of the ENaC complex. May regulate bicarbonate secretion and salvage in epithelial cells by regulating the transporter SLC4A7. Can inhibit the chloride channel activity of ANO1. Plays a role in the chloride and bicarbonate homeostasis during sperm epididymal maturation and capacitation. This is Cystic fibrosis transmembrane conductance regulator from Rattus norvegicus (Rat).